Here is a 93-residue protein sequence, read N- to C-terminus: Phosphoribosyl-ATP pyrophosphatase (93 aa).

It belongs to the PRA-PH family.

The protein resides in the cytoplasm. The catalysed reaction is 1-(5-phospho-beta-D-ribosyl)-ATP + H2O = 1-(5-phospho-beta-D-ribosyl)-5'-AMP + diphosphate + H(+). Its pathway is amino-acid biosynthesis; L-histidine biosynthesis; L-histidine from 5-phospho-alpha-D-ribose 1-diphosphate: step 2/9. The sequence is that of Phosphoribosyl-ATP pyrophosphatase from Metallosphaera sedula (strain ATCC 51363 / DSM 5348 / JCM 9185 / NBRC 15509 / TH2).